The chain runs to 345 residues: MKEFDLESYDYYLPKELIANYPVLPKEKAKLLVYDRRSQTITHTTFEHVLDFFPKNALVVLNDTKVMKARLFGSKHAFLPSKTTEVFFHRFFKDNTALTQIKGKIKAGDKIFFDENYCAEVLELLHNGQRLIAFYDNQTPLNQENILKLLEQYGHMPLPPYIKRADESLDAHEYQSVFAKHIGAVAAPTASLHFSQHTLEKLLKDFKHAFLTLHVGAGTFLGVETKDIREHQIHTEVLRIPKKSQEILQKSQEILCIGTTALRSVEYFKRLENPNQEAFECDIFLHLANPILHVNYLLTNFHLPKSSLLMLVSAMIGLEKTKEIYKIAIEKKYRFYSYGDGMLIL.

This sequence belongs to the QueA family. Monomer.

It localises to the cytoplasm. The catalysed reaction is 7-aminomethyl-7-carbaguanosine(34) in tRNA + S-adenosyl-L-methionine = epoxyqueuosine(34) in tRNA + adenine + L-methionine + 2 H(+). Its pathway is tRNA modification; tRNA-queuosine biosynthesis. In terms of biological role, transfers and isomerizes the ribose moiety from AdoMet to the 7-aminomethyl group of 7-deazaguanine (preQ1-tRNA) to give epoxyqueuosine (oQ-tRNA). The chain is S-adenosylmethionine:tRNA ribosyltransferase-isomerase from Helicobacter pylori (strain P12).